The primary structure comprises 519 residues: PTS system mannitol-specific EIICB component (519 aa).

The Cytoplasmic segment spans residues 1-30; the sequence is MAQTETQEKKGLGRKVQAFGSFLSSMIMPN. In terms of domain architecture, PTS EIIC type-2 spans 19-351; the sequence is FGSFLSSMIM…MKFTKEPKQD (333 aa). Residues 31-52 traverse the membrane as a helical segment; the sequence is IGAFIAWGFIAAIFIDNGWYPN. The Extracellular segment spans residues 53-56; sequence KELS. The helical transmembrane segment at 57–77 threads the bilayer; sequence QLAGPMITYLIPLLIAFSGGR. The Cytoplasmic portion of the chain corresponds to 78–141; the sequence is LIHDLRGGIV…QGFEMLFNNF (64 aa). A helical membrane pass occupies residues 142–163; the sequence is SAGILAFIMTILGFKLLAPIMQ. Topologically, residues 164–172 are extracellular; the sequence is FIMHILSVA. A helical transmembrane segment spans residues 173–193; that stretch reads VEFLVHLHLLPIVSIIVEPAK. Residues 194 to 280 lie on the Cytoplasmic side of the membrane; it reads ILFLNNAINH…VLMRPLLFIA (87 aa). Residues 281–300 traverse the membrane as a helical segment; that stretch reads VILGGMTGVATYQATGFGFK. Residues 301–320 are Extracellular-facing; that stretch reads SPASPGSFIVYCLNAPKGEF. Residues 321 to 342 form a helical membrane-spanning segment; that stretch reads LHMVLGVFLAALVSFVVAALIM. Over 343-519 the chain is Cytoplasmic; sequence KFTKEPKQDL…NNLKKDQDKA (177 aa). The disordered stretch occupies residues 366 to 406; the sequence is KSSVSSKLTGATTGTGAAGVAANKANGEDQNEASSEDEEED. The span at 367–387 shows a compositional bias: low complexity; it reads SSVSSKLTGATTGTGAAGVAA. Over residues 394-406 the composition is skewed to acidic residues; it reads DQNEASSEDEEED. The region spanning 425 to 519 is the PTS EIIB type-2 domain; sequence DHVIFACDAG…NNLKKDQDKA (95 aa). Cysteine 431 functions as the Phosphocysteine intermediate; for EIIB activity in the catalytic mechanism. Position 431 is a phosphocysteine; by EIIA (cysteine 431).

In terms of assembly, homodimer.

The protein resides in the cell membrane. The catalysed reaction is D-mannitol(out) + N(pros)-phospho-L-histidyl-[protein] = D-mannitol 1-phosphate(in) + L-histidyl-[protein]. Its function is as follows. The phosphoenolpyruvate-dependent sugar phosphotransferase system (sugar PTS), a major carbohydrate active transport system, catalyzes the phosphorylation of incoming sugar substrates concomitantly with their translocation across the cell membrane. The enzyme II CmtAB PTS system is involved in D-mannitol transport. The polypeptide is PTS system mannitol-specific EIICB component (mtlA) (Staphylococcus haemolyticus (strain JCSC1435)).